Here is a 79-residue protein sequence, read N- to C-terminus: Transcriptional regulator SplA (79 aa).

Functionally, regulator of the spore photoproduct lyase operon (splAB). This is Transcriptional regulator SplA (splA) from Bacillus subtilis (strain 168).